The primary structure comprises 170 residues: Peptide deformylase (170 aa).

Residues C93 and H135 each coordinate Fe cation. E136 is a catalytic residue. H139 contributes to the Fe cation binding site.

The protein belongs to the polypeptide deformylase family. Fe(2+) serves as cofactor.

The enzyme catalyses N-terminal N-formyl-L-methionyl-[peptide] + H2O = N-terminal L-methionyl-[peptide] + formate. In terms of biological role, removes the formyl group from the N-terminal Met of newly synthesized proteins. Requires at least a dipeptide for an efficient rate of reaction. N-terminal L-methionine is a prerequisite for activity but the enzyme has broad specificity at other positions. The polypeptide is Peptide deformylase (Syntrophobacter fumaroxidans (strain DSM 10017 / MPOB)).